Consider the following 115-residue polypeptide: Methylmalonyl-CoA decarboxylase subunit delta (115 aa).

The helical transmembrane segment at 11–31 (WLIMAINMTVVFAVLIALGIL) threads the bilayer. The segment at 46–70 (EAPAATAPVATPTATPVAPANASAQ) is disordered. The span at 48–65 (PAATAPVATPTATPVAPA) shows a compositional bias: low complexity.

This sequence belongs to the OadG family. The methylmalonyl-CoA decarboxylase is composed of five subunits: the carboxyltransferase alpha subunit (MmdA), the tunnel beta subunit (MmdB), the biotin-containing gamma subunit (MmdC), and the delta (MmdD) and epsilon (MmdE) subunits. Post-translationally, the N-terminus is blocked.

It localises to the cell membrane. It catalyses the reaction (S)-methylmalonyl-CoA + Na(+)(in) + H(+)(out) = propanoyl-CoA + Na(+)(out) + CO2. Its activity is regulated as follows. Completely inhibited by avidin. Functionally, subunit of the sodium ion pump methylmalonyl-CoA decarboxylase, which converts the chemical energy of a decarboxylation reaction into an electrochemical gradient of Na(+) ions across the cytoplasmic membrane, thereby creating a sodium ion motive force that is used for ATP synthesis. The delta subunit is required for catalytic activity as well as for the proper assembly of the individual subunits to an enzyme complex. Can also convert malonyl-CoA into acetyl-CoA. The chain is Methylmalonyl-CoA decarboxylase subunit delta from Veillonella parvula (Staphylococcus parvulus).